The primary structure comprises 207 residues: Casparian strip membrane protein 1 (207 aa).

A2 bears the N-acetylalanine mark. The Cytoplasmic segment spans residues 2 to 44; that stretch reads AKESTTIDVGEPNTMTKSTSHVVVDEKKKKGFVAAAAGGGYKR. A helical membrane pass occupies residues 45 to 65; the sequence is GLAVFDFLLRLAAIGITIGAS. Residues 66–95 are Extracellular-facing; sequence SVMFTAEETLPFFTQFLQFQAGYDDFPTFQ. A helical transmembrane segment spans residues 96–116; it reads FFVIAIAIVASYLVLSLPFSI. At 117–128 the chain is on the cytoplasmic side; the sequence is VTIVRPLAVAPR. A helical transmembrane segment spans residues 129 to 149; the sequence is LILLISDTVVLTLTTAAAAAA. Over 150–181 the chain is Extracellular; the sequence is ASIVYLAHNGNTNTNWLPICQQFGDFCQTAST. Residues 182–202 traverse the membrane as a helical segment; the sequence is AVVAASISVAFFVLLIVISAI. Over 203–207 the chain is Cytoplasmic; sequence ALKRH.

The protein belongs to the Casparian strip membrane proteins (CASP) family. As to quaternary structure, homodimer and heterodimers.

The protein resides in the cell membrane. Its function is as follows. Regulates membrane-cell wall junctions and localized cell wall deposition. Required for establishment of the Casparian strip membrane domain (CSD) and the subsequent formation of Casparian strips, a cell wall modification of the root endodermis that determines an apoplastic barrier between the intraorganismal apoplasm and the extraorganismal apoplasm and prevents lateral diffusion. The polypeptide is Casparian strip membrane protein 1 (Raphanus raphanistrum (Wild radish)).